The following is a 316-amino-acid chain: Ribosomal RNA small subunit methyltransferase H (316 aa).

Residues 35–37, Asp55, Phe84, Asp105, and Gln112 each bind S-adenosyl-L-methionine; that span reads AGH.

Belongs to the methyltransferase superfamily. RsmH family.

The protein localises to the cytoplasm. The enzyme catalyses cytidine(1402) in 16S rRNA + S-adenosyl-L-methionine = N(4)-methylcytidine(1402) in 16S rRNA + S-adenosyl-L-homocysteine + H(+). Functionally, specifically methylates the N4 position of cytidine in position 1402 (C1402) of 16S rRNA. This chain is Ribosomal RNA small subunit methyltransferase H, found in Streptococcus pneumoniae (strain P1031).